The sequence spans 989 residues: Phosphoenolpyruvate carboxylase (989 aa).

Residues H175 and K630 contribute to the active site.

This sequence belongs to the PEPCase type 1 family. Mg(2+) serves as cofactor.

It carries out the reaction oxaloacetate + phosphate = phosphoenolpyruvate + hydrogencarbonate. Its function is as follows. Forms oxaloacetate, a four-carbon dicarboxylic acid source for the tricarboxylic acid cycle. The chain is Phosphoenolpyruvate carboxylase from Prochlorococcus marinus (strain MIT 9515).